The following is a 317-amino-acid chain: Putative ribosomal protein uL10-like (317 aa).

A Phosphotyrosine modification is found at Y24. The residue at position 59 (T59) is a Phosphothreonine. Residues 292–317 (AAAPAKVEAKEESEESDEDMGFGLFD) form a disordered region. K297 participates in a covalent cross-link: Glycyl lysine isopeptide (Lys-Gly) (interchain with G-Cter in SUMO1); alternate. Residue K297 forms a Glycyl lysine isopeptide (Lys-Gly) (interchain with G-Cter in SUMO2); alternate linkage. Residues 302–311 (EESEESDEDM) show a composition bias toward acidic residues. Residues S304 and S307 each carry the phosphoserine modification.

It belongs to the universal ribosomal protein uL10 family. As to quaternary structure, P0 forms a pentameric complex by interaction with dimers of P1 and P2.

Its function is as follows. Ribosomal protein P0 is the functional equivalent of E.coli protein L10. The chain is Putative ribosomal protein uL10-like (RPLP0P6) from Homo sapiens (Human).